We begin with the raw amino-acid sequence, 456 residues long: RuvB-like 1 (456 aa).

Lysine 2 participates in a covalent cross-link: Glycyl lysine isopeptide (Lys-Gly) (interchain with G-Cter in SUMO2). Glycine 70–threonine 77 provides a ligand contact to ATP. Lysine 225 is covalently cross-linked (Glycyl lysine isopeptide (Lys-Gly) (interchain with G-Cter in SUMO1); alternate). A Glycyl lysine isopeptide (Lys-Gly) (interchain with G-Cter in SUMO2); alternate cross-link involves residue lysine 225. A Glycyl lysine isopeptide (Lys-Gly) (interchain with G-Cter in SUMO2) cross-link involves residue lysine 445. Lysine 453 carries the post-translational modification N6-acetyllysine.

This sequence belongs to the RuvB family. Forms homohexameric rings. Can form a dodecamer with RUVBL2 made of two stacked hexameric rings; however, even though RUVBL1 and RUVBL2 are present in equimolar ratio, the oligomeric status of each hexamer is not known. Oligomerization may regulate binding to nucleic acids and conversely, binding to nucleic acids may affect the dodecameric assembly. Interaction of the complex with DHX34 results in conformational changes of the N-terminus of the RUVBL2 subunits, resulting in loss of nucleotide binding ability and ATP hydrolysis of the complex. Interacts with the transcriptional activation domain of MYC. Component of the RNA polymerase II holoenzyme complex. May also act to bridge the LEF1/TCF1-CTNNB1 complex and TBP. Component of the NuA4 histone acetyltransferase complex which contains the catalytic subunit KAT5/TIP60 and the subunits EP400, TRRAP/PAF400, BRD8/SMAP, EPC1, DMAP1/DNMAP1, RUVBL1/TIP49, RUVBL2, ING3, actin, ACTL6A/BAF53A, MORF4L1/MRG15, MORF4L2/MRGX, MRGBP, YEATS4/GAS41, VPS72/YL1 and MEAF6. The NuA4 complex interacts with MYC and the adenovirus E1A protein. RUVBL1 interacts with EP400. Component of a NuA4-related complex which contains EP400, TRRAP/PAF400, SRCAP, BRD8/SMAP, EPC1, DMAP1/DNMAP1, RUVBL1/TIP49, RUVBL2, actin, ACTL6A/BAF53A, VPS72 and YEATS4/GAS41. Component of the BAF53 complex, at least composed of ACTL6A/BAF53A, RUVBL1/TIP49, SMARCA2/BRM, and TRRAP/PAF400. Component of some MLL1/MLL complex, at least composed of the core components KMT2A/MLL1, ASH2L, HCFC1/HCF1, WDR5 and RBBP5, as well as the facultative components BACC1, CHD8, E2F6, HSP70, INO80C, KANSL1, LAS1L, MAX, MCRS1, MGA, MYST1/MOF, PELP1, PHF20, PRP31, RING2, RUVB1/TIP49A, RUVB2/TIP49B, SENP3, TAF1, TAF4, TAF6, TAF7, TAF9 and TEX10. Associates with alpha and gamma tubulins, particularly during metaphase and early anaphase. Interacts with NPAT. Component of the chromatin-remodeling INO80 complex; specifically part of a complex module associated with the helicase ATP-binding and the helicase C-terminal domain of INO80. Interacts with IGHMBP2. Interacts with OFD1. Interacts with HINT1. Component of a complex with USP49 and PSMC5. Component of a SWR1-like complex. Component of the R2TP complex composed at least of RUVBL1, RUVBL2, RPAP3 and PIHD1. Component of the PAQosome complex which is responsible for the biogenesis of several protein complexes and which consists of R2TP complex members RUVBL1, RUVBL2, RPAP3 and PIH1D1, URI complex members PFDN2, PFDN6, PDRG1, UXT and URI1 as well as ASDURF, POLR2E and DNAAF10/WDR92. Interacts with PIH1D1. Interacts with ITFG1. Interacts with WAC; WAC positively regulates MTOR activity by promoting the assembly of the TTT complex composed of TELO2, TTI1 and TTI2 and the RUVBL complex composed of RUVBL1 and RUVBL2 into the TTT-RUVBL complex which leads to the dimerization of the mTORC1 complex and its subsequent activation. The RUVBL1/RUVBL2 complex interacts with ZNHIT1 (via HIT-type zinc finger), ZNHIT3 (via HIT-type zinc finger), ZNHIT6 (via HIT-type zinc finger) and DDX59/ZNHIT5 (via HIT-type zinc finger) in the presence of ADP. Interacts with NOPCHAP1; the interaction is direct and disrupted upon ATP binding. Interacts with SMG1. Interacts with NOP2, NOP56 and NUFIP1. In terms of assembly, (Microbial infection) Interacts with Mumps L polymerase; this interaction regulates the viral transcription. In terms of tissue distribution, ubiquitously expressed with high expression in heart, skeletal muscle and testis.

The protein localises to the nucleus matrix. The protein resides in the nucleus. It localises to the nucleoplasm. Its subcellular location is the cytoplasm. It is found in the membrane. The protein localises to the cytoskeleton. The protein resides in the microtubule organizing center. It localises to the centrosome. Its subcellular location is the dynein axonemal particle. It catalyses the reaction ATP + H2O = ADP + phosphate + H(+). In terms of biological role, possesses single-stranded DNA-stimulated ATPase and ATP-dependent DNA helicase (3' to 5') activity; hexamerization is thought to be critical for ATP hydrolysis and adjacent subunits in the ring-like structure contribute to the ATPase activity. Component of the NuA4 histone acetyltransferase complex which is involved in transcriptional activation of select genes principally by acetylation of nucleosomal histones H4 and H2A. This modification may both alter nucleosome-DNA interactions and promote interaction of the modified histones with other proteins which positively regulate transcription. This complex may be required for the activation of transcriptional programs associated with oncogene and proto-oncogene mediated growth induction, tumor suppressor mediated growth arrest and replicative senescence, apoptosis, and DNA repair. The NuA4 complex ATPase and helicase activities seem to be, at least in part, contributed by the association of RUVBL1 and RUVBL2 with EP400. NuA4 may also play a direct role in DNA repair when recruited to sites of DNA damage. Component of a SWR1-like complex that specifically mediates the removal of histone H2A.Z/H2AZ1 from the nucleosome. Proposed core component of the chromatin remodeling INO80 complex which exhibits DNA- and nucleosome-activated ATPase activity and catalyzes ATP-dependent nucleosome sliding. Plays an essential role in oncogenic transformation by MYC and also modulates transcriptional activation by the LEF1/TCF1-CTNNB1 complex. Essential for cell proliferation. May be able to bind plasminogen at cell surface and enhance plasminogen activation. This chain is RuvB-like 1, found in Homo sapiens (Human).